A 101-amino-acid polypeptide reads, in one-letter code: MGTRCLLVLLLVLLVLKCEVQGDDMARQDEATGPTLLSQMQESLYGYWGSAKAAAQDLYEKTYLTAMDEKIRDMYSTSTAAVRIYTGILTDQILSMLTGDP.

The first 22 residues, 1–22 (MGTRCLLVLLLVLLVLKCEVQG), serve as a signal peptide directing secretion. The propeptide at 23-28 (DDMARQ) is removed in mature form. The lipid binding stretch occupies residues 66–74 (AMDEKIRDM). The interval 78-101 (STAAVRIYTGILTDQILSMLTGDP) is lipoprotein lipase cofactor.

This sequence belongs to the apolipoprotein C2 family. Post-translationally, proapolipoprotein C-II is synthesized as a sialic acid containing glycoprotein which is subsequently desialylated prior to its proteolytic processing. Proapolipoprotein C-II, the major form found in plasma undergoes proteolytic cleavage of its N-terminal hexapeptide to generate the mature form apolipoprotein C-II, which occurs as the minor form in plasma.

The protein localises to the secreted. In terms of biological role, component of chylomicrons, very low-density lipoproteins (VLDL), low-density lipoproteins (LDL), and high-density lipoproteins (HDL) in plasma. Plays an important role in lipoprotein metabolism as an activator of lipoprotein lipase, the enzyme which hydrolyzes the triacylglycerols on chylomicrons and VLDL. The sequence is that of Apolipoprotein C-II (APOC2) from Panthera tigris altaica (Siberian tiger).